The sequence spans 780 residues: Gelsolin (780 aa).

The first 25 residues, 1–25, serve as a signal peptide directing secretion; that stretch reads MAPYCSSLRSALLVLALCALSPSHA. Residues 28-48 are disordered; the sequence is ASRGRAQERAPQSRVSETRPS. The interval 51 to 174 is actin-severing; that stretch reads VVEHPEFLKA…YKKGGVASGF (124 aa). The stretch at 74–155 is one Gelsolin-like 1 repeat; it reads FDLVPVPPNL…EVQGFESSTF (82 aa). Residue Y84 is modified to Phosphotyrosine. Ca(2+)-binding residues include G90, D91, E122, D134, G139, and A141. An actin-actin interfilament contact point region spans residues 121–124; sequence DESG. 160-167 contributes to the a 1,2-diacyl-sn-glycero-3-phospho-(1D-myo-inositol-4,5-bisphosphate) binding site; the sequence is KSGLKYKK. V170 is a Ca(2+) binding site. 186 to 194 serves as a coordination point for a 1,2-diacyl-sn-glycero-3-phospho-(1D-myo-inositol-4,5-bisphosphate); the sequence is RLFQVKGRR. One copy of the Gelsolin-like 2 repeat lies at 196–268; the sequence is VRATEVPVSW…SEEGSEPEAM (73 aa). The Ca(2+) site is built by G211 and D212. C213 and C226 are disulfide-bonded. Residues E234, D284, E327, D328, and E352 each contribute to the Ca(2+) site. Residues 244-286 form a disordered region; that stretch reads GIRDNERSGRAQVHVSEEGSEPEAMLQVLGPKPDLPQGTEDTA. Residues 315-387 form a Gelsolin-like 3 repeat; sequence DENPFAQSAL…LPEGGETPLF (73 aa). Phosphotyrosine is present on residues Y407 and Y463. The interval 432–780 is actin-binding, Ca-sensitive; that stretch reads AAQHGMDDDG…LDRALAELAA (349 aa). The Gelsolin-like 4 repeat unit spans residues 453–534; the sequence is SNKVLVDPAT…VQGKEPAHLM (82 aa). Ca(2+) is bound by residues G469, D470, E500, D512, G517, P519, and T549. The stretch at 576–640 is one Gelsolin-like 5 repeat; it reads AVEVMPKAGA…EEGSEPDGFW (65 aa). The residue at position 582 (K582) is an N6-acetyllysine. 2 residues coordinate Ca(2+): N589 and D590. Phosphotyrosine is present on Y601. E612 contacts Ca(2+). A Phosphotyrosine modification is found at Y649. A Gelsolin-like 6 repeat occupies 679–754; sequence IEEVPGELMQ…VRQGFEPPSF (76 aa). Residues D694, D695, and E717 each contribute to the Ca(2+) site. T740 bears the Phosphothreonine mark.

It belongs to the villin/gelsolin family. As to quaternary structure, binds to actin and to fibronectin. Identified in a complex composed of ACTA1, COBL, GSN and TMSB4X. Interacts with the inactive form of EIF2AK2/PKR. Interacts with FLII. Phosphorylated on tyrosine residues in vitro.

The protein localises to the secreted. It localises to the cytoplasm. Its subcellular location is the cytoskeleton. Functionally, calcium-regulated, actin-modulating protein that binds to the plus (or barbed) ends of actin monomers or filaments, preventing monomer exchange (end-blocking or capping). It can promote the assembly of monomers into filaments (nucleation) as well as sever filaments already formed. Plays a role in ciliogenesis. The sequence is that of Gelsolin (Gsn) from Rattus norvegicus (Rat).